Here is a 354-residue protein sequence, read N- to C-terminus: Guanine nucleotide-binding protein G(t) subunit alpha-2 (354 aa).

The segment at Met1–Asp28 is disordered. The N-myristoyl glycine moiety is linked to residue Gly2. Basic and acidic residues predominate over residues Ala7–Asp28. Residues Lys32–Phe354 enclose the G-alpha domain. The tract at residues Lys35 to Thr48 is G1 motif. Residues Gly40–Ser47, Leu175–Thr181, Asp200–Gln204, Asn269–Asp272, and Ala326 contribute to the GTP site. Mg(2+) contacts are provided by Ser47 and Thr181. Positions Asp173 to Thr181 are G2 motif. The tract at residues Phe196–Arg205 is G3 motif. The segment at Val265–Asp272 is G4 motif. The segment at Thr324–Thr329 is G5 motif.

The protein belongs to the G-alpha family. G(i/o/t/z) subfamily. As to quaternary structure, g proteins are composed of 3 units; alpha, beta and gamma. The alpha chain contains the guanine nucleotide binding site. In the retina, expressed in the rod photoreceptors.

It localises to the cell projection. It is found in the cilium. Its subcellular location is the photoreceptor outer segment. The protein resides in the photoreceptor inner segment. Guanine nucleotide-binding proteins (G proteins) are involved as modulators or transducers in various transmembrane signaling systems. Transducin is an amplifier and one of the transducers of a visual impulse that performs the coupling between rhodopsin and cGMP-phosphodiesterase. In Mus musculus (Mouse), this protein is Guanine nucleotide-binding protein G(t) subunit alpha-2 (Gnat2).